A 315-amino-acid polypeptide reads, in one-letter code: Eukaryotic translation initiation factor 2 subunit 1 (315 aa).

The S1 motif domain maps to 17–88 (DDVVMVNVRS…DKGYIDLSKR (72 aa)). Phosphoserine is present on residues Ser49 and Ser52. The tract at residues 292–315 (RLEKENAEVDGDDDAEEMEAKTED) is disordered. The span at 299-308 (EVDGDDDAEE) shows a compositional bias: acidic residues.

It belongs to the eIF-2-alpha family. Eukaryotic translation initiation factor 2 eIF2 is a heterotrimeric complex composed of an alpha, a beta and a gamma subunit. Phosphorylation at Ser-49 and Ser-52 stabilizes the eIF-2/GDP/eIF2B complex and prevents GDP/GTP exchange reaction, thus impairing the recycling of eIF-2 between successive rounds of initiation and leading to global inhibition of translation, while concomitantly initiating the preferential translation of integrated stress response (ISR)-specific mRNAs.

The protein localises to the cytoplasm. Its subcellular location is the stress granule. It localises to the cytosol. Activity is regulated by phosphorylation at Ser-49 and Ser-52, which stabilizes the eIF-2/GDP/eIF2B complex and prevents the eIF2B-mediated exchange of GDP for GTP, thereby preventing the formation of the 43S pre-initiation complex (PIC). This results in the global attenuation of 5' cap-dependent protein synthesis and concomitant translation of ISR-specific mRNAs that contain a short upstream open reading frame (uORF) in their 5' UTR. Its function is as follows. Functions in the early steps of protein synthesis by forming a ternary complex with GTP and initiator tRNA. This complex binds to a 40S ribosomal subunit, followed by mRNA binding to form a 43S pre-initiation complex. Junction of the 60S ribosomal subunit to form the 80S initiation complex is preceded by hydrolysis of the GTP bound to eIF-2 and release of an eIF-2-GDP binary complex. In order for eIF-2 to recycle and catalyze another round of initiation, the GDP bound to eIF-2 must exchange with GTP by way of a reaction catalyzed by eIF2B. EIF2S1/eIF2-alpha is a key component of the integrated stress response (ISR), required for adaptation to various stress: phosphorylation by metabolic-stress sensing protein kinases in response to stress converts EIF2S1/eIF-2-alpha in a global protein synthesis inhibitor, leading to a attenuation of cap-dependent translation, while concomitantly initiating the preferential translation of ISR-specific mRNAs, such as the transcriptional activators ATF4 and QRICH1. This Xenopus tropicalis (Western clawed frog) protein is Eukaryotic translation initiation factor 2 subunit 1 (eif2s1).